The primary structure comprises 322 residues: Pilin gene-inverting protein (322 aa).

In terms of biological role, may be the site-specific invertase required for pilin gene inversion. Moraxella can express either a Q or I pilin; the inversion of 2 kb of DNA determines which pilin is expressed. This chain is Pilin gene-inverting protein (piv), found in Moraxella lacunata.